The chain runs to 243 residues: DNA repair protein RecO (243 aa).

This sequence belongs to the RecO family.

Functionally, involved in DNA repair and RecF pathway recombination. In Phenylobacterium zucineum (strain HLK1), this protein is DNA repair protein RecO.